Here is a 568-residue protein sequence, read N- to C-terminus: Periplasmic trehalase (568 aa).

Positions 1 to 38 (MPHAPARSGDAMSAAAPPCCTSLLGLSLSMFVAPCALA) are cleaved as a signal peptide. Residues Arg-169, 176-177 (WD), Asn-213, 222-224 (RSQ), 294-296 (RPE), and Gly-327 each bind substrate. Residues Asp-329 and Glu-511 each act as proton donor/acceptor in the active site. Glu-526 provides a ligand contact to substrate.

Belongs to the glycosyl hydrolase 37 family.

The protein resides in the periplasm. The enzyme catalyses alpha,alpha-trehalose + H2O = alpha-D-glucose + beta-D-glucose. Functionally, provides the cells with the ability to utilize trehalose at high osmolarity by splitting it into glucose molecules that can subsequently be taken up by the phosphotransferase-mediated uptake system. This is Periplasmic trehalase from Xanthomonas campestris pv. campestris (strain 8004).